The primary structure comprises 3859 residues: Transformation/transcription domain-associated protein (3859 aa).

N-acetylalanine is present on Ala-2. Positions 491 to 526 are enriched in pro residues; that stretch reads PAAPGPAPSPAPVPAPPPPPPPPPPATPVTPAPVPP. The interval 491–541 is disordered; that stretch reads PAAPGPAPSPAPVPAPPPPPPPPPPATPVTPAPVPPFEKQGEKDKEDKQTF. Basic and acidic residues predominate over residues 529-539; that stretch reads KQGEKDKEDKQ. A Phosphoserine modification is found at Ser-1628. The tract at residues 2010–2388 is interaction with TP53; it reads SEVVIKWELQ…SPMAANQTPT (379 aa). The interval 2023–2044 is disordered; that stretch reads DQQPDSDMDPNSSGEGVNSVSS. The segment covering 2033 to 2044 has biased composition (low complexity); sequence NSSGEGVNSVSS. A Bipartite nuclear localization signal motif is present at residues 2047-2062; the sequence is KRGLSVDSAQEVKRFR. Residues Ser-2051 and Ser-2077 each carry the phosphoserine modification. Residue Lys-2543 forms a Glycyl lysine isopeptide (Lys-Gly) (interchain with G-Cter in SUMO2) linkage. A compositionally biased stretch (basic and acidic residues) spans 2543-2554; that stretch reads KQEPRERENSES. The tract at residues 2543–2578 is disordered; it reads KQEPRERENSESKEEDVEIDIELAPGDQTSTPKTKE. The region spanning 2692-3275 is the FAT domain; sequence VLKYLGKTHN…YFPIRTLYLT (584 aa). An N6-acetyllysine modification is found at Lys-3078. In terms of domain architecture, PI3K/PI4K catalytic spans 3500–3823; sequence MPRVEIVQKH…AVTAIMTRLH (324 aa). Residues 3506–3512 form a G-loop region; the sequence is VQKHNTA. The segment at 3687-3695 is catalytic loop; it reads HLNRLNPEM. The segment at 3707–3732 is activation loop; the sequence is VAYFRFDINDATGDLDANRPVPFRLT. The FATC domain maps to 3827 to 3859; sequence QFEGGESKVNTLVAAANSLDNLCRMDPAWHPWL.

Belongs to the PI3/PI4-kinase family. TRA1 subfamily. As to quaternary structure, interacts with MYC, E2F1 and E2F4 transcription factors. Interacts directly with p53/TP53. Interacts with GCN5L2. Component of various HAT complexes. Component of the PCAF complex, at least composed of TADA2L/ADA2, SUPT3H, TADA3L/ADA3, TAF5L/PAF65-beta, TAF6L/PAF65-alpha, TAF10/TAFII30, TAF12/TAFII20, TAF9/TAFII31 and TRRAP. Component of the TFTC-HAT complex, at least composed of TAF5L, TAF6L, TADA3L, SUPT3H/SPT3, TAF2/TAFII150, TAF4/TAFII135, TAF5/TAFII100, GCN5L2/GCN5, TAF10 and TRRAP. Component of the NuA4 histone acetyltransferase complex which contains the catalytic subunit KAT5/TIP60 and the subunits EP400, TRRAP/PAF400, BRD8/SMAP, EPC1, DMAP1/DNMAP1, RUVBL1/TIP49, RUVBL2, ING3, actin, ACTL6A/BAF53A, MORF4L1/MRG15, MORF4L2/MRGX, MRGBP, YEATS4/GAS41, VPS72/YL1 and MEAF6. Component of the STAGA complex, at least composed of SUPT3H, GCN5L2, SUPT7L, TAF5L, TAF6L, TADA3L, TAD1L, TAF10, TAF12, TRRAP and TAF9. The STAGA core complex is associated with a subcomplex required for histone deubiquitination composed of ATXN7L3, ENY2 and USP22. Component of the BAF53 complex, at least composed of BAF53A, RUVBL1, SMARCA4/BRG1, and TRRAP, which preferentially acetylates histone H4 (and H2A) within nucleosomes. Interacts with NPAT. Interaction with TELO2 and TTI1. Component of a SWR1-like complex.

It is found in the nucleus. Adapter protein, which is found in various multiprotein chromatin complexes with histone acetyltransferase activity (HAT), which gives a specific tag for epigenetic transcription activation. Component of the NuA4 histone acetyltransferase complex which is responsible for acetylation of nucleosomal histones H4 and H2A. Plays a central role in MYC transcription activation, and also participates in cell transformation by MYC. Required for p53/TP53-, E2F1- and E2F4-mediated transcription activation. Also involved in transcription activation mediated by the adenovirus E1A, a viral oncoprotein that deregulates transcription of key genes. Probably acts by linking transcription factors such as E1A, MYC or E2F1 to HAT complexes such as STAGA thereby allowing transcription activation. Probably not required in the steps following histone acetylation in processes of transcription activation. May be required for the mitotic checkpoint and normal cell cycle progression. Component of a SWR1-like complex that specifically mediates the removal of histone H2A.Z/H2AZ1 from the nucleosome. May play a role in the formation and maintenance of the auditory system. The polypeptide is Transformation/transcription domain-associated protein (TRRAP) (Homo sapiens (Human)).